Reading from the N-terminus, the 146-residue chain is Ribonuclease H (146 aa).

Positions 1 to 141 (MEKIDIFTDG…ADALANRGVE (141 aa)) constitute an RNase H type-1 domain. 4 residues coordinate Mg(2+): aspartate 9, glutamate 47, aspartate 69, and aspartate 133.

This sequence belongs to the RNase H family. As to quaternary structure, monomer. Mg(2+) is required as a cofactor.

It is found in the cytoplasm. It carries out the reaction Endonucleolytic cleavage to 5'-phosphomonoester.. Functionally, endonuclease that specifically degrades the RNA of RNA-DNA hybrids. The chain is Ribonuclease H from Herminiimonas arsenicoxydans.